Here is a 623-residue protein sequence, read N- to C-terminus: Bifunctional dihydrofolate reductase-thymidylate synthase (623 aa).

Residues 9-237 (DIYAICACCK…TTLDFLVYSK (229 aa)) form the DHFR domain. 13–14 (IC) contributes to the substrate binding site. Residues Ala15 and 38 to 44 (GLGNKGT) each bind NADP(+). Asp53 contributes to the substrate binding site. Repeat copies occupy residues 88–91 (GGDN), 94–97 (GGDN), and 100–103 (GGDN). Residues 88-103 (GGDNTSGGDNTHGGDN) form a 3 X 4 AA repeats of G-G-D-N region. Residues 115–117 (RSS), 137–139 (SKT), and Asp153 contribute to the NADP(+) site. Residues Ile173, Tyr179, and Thr194 each contribute to the substrate site. 174–181 (GGAQVYRE) lines the NADP(+) pocket. Positions 263 to 309 (TAMRRNVAPRTAAPPMGPHSRANGERAPPRARARRTTPRQRKTTSCT) are disordered. The segment covering 291–304 (PRARARRTTPRQRK) has biased composition (basic residues). The tract at residues 337–623 (QHPEYQYLGI…HDKITMEMAA (287 aa)) is thymidylate synthase. Arg360 contributes to the dUMP binding site. Residue Cys505 is part of the active site. DUMP is bound by residues His506, 524–528 (QRSCD), Asn536, and 566–568 (HVY).

The protein in the N-terminal section; belongs to the dihydrofolate reductase family. It in the C-terminal section; belongs to the thymidylate synthase family. In terms of assembly, homodimer.

The catalysed reaction is (6S)-5,6,7,8-tetrahydrofolate + NADP(+) = 7,8-dihydrofolate + NADPH + H(+). The enzyme catalyses dUMP + (6R)-5,10-methylene-5,6,7,8-tetrahydrofolate = 7,8-dihydrofolate + dTMP. It participates in cofactor biosynthesis; tetrahydrofolate biosynthesis; 5,6,7,8-tetrahydrofolate from 7,8-dihydrofolate: step 1/1. In terms of biological role, bifunctional enzyme. Involved in de novo dTMP biosynthesis. Key enzyme in folate metabolism. Catalyzes an essential reaction for de novo glycine and purine synthesis, DNA precursor synthesis, and for the conversion of dUMP to dTMP. In Plasmodium vivax, this protein is Bifunctional dihydrofolate reductase-thymidylate synthase.